Reading from the N-terminus, the 185-residue chain is Ribosome-recycling factor (185 aa).

The protein belongs to the RRF family.

It localises to the cytoplasm. Responsible for the release of ribosomes from messenger RNA at the termination of protein biosynthesis. May increase the efficiency of translation by recycling ribosomes from one round of translation to another. This is Ribosome-recycling factor from Dehalococcoides mccartyi (strain CBDB1).